Consider the following 122-residue polypeptide: Large ribosomal subunit protein uL14c (122 aa).

It belongs to the universal ribosomal protein uL14 family. In terms of assembly, part of the 50S ribosomal subunit.

It is found in the plastid. The protein resides in the chloroplast. Its function is as follows. Binds to 23S rRNA. The chain is Large ribosomal subunit protein uL14c from Carica papaya (Papaya).